Consider the following 136-residue polypeptide: MARTKQTARKTVGGDINSRISEKRAKSDNSKNIDLKKVHRYKPGTVALREIRKYQKSTNLLIRKLPFQRLVRELAQDYKSDLRFQNSAVLALQEASESYLVNLFEDTNLCAIHAKRVTIMPKDIYLARRIRGEMIF.

This sequence belongs to the histone H3 family. In terms of assembly, the nucleosome is a histone octamer containing two molecules each of H2A, H2B, H3 and H4 assembled in one H3-H4 heterotetramer and two H2A-H2B heterodimers. The octamer wraps approximately 147 bp of DNA.

It is found in the nucleomorph. Its subcellular location is the chromosome. Core component of nucleosome. Nucleosomes wrap and compact DNA into chromatin, limiting DNA accessibility to the cellular machineries which require DNA as a template. Histones thereby play a central role in transcription regulation, DNA repair, DNA replication and chromosomal stability. DNA accessibility is regulated via a complex set of post-translational modifications of histones, also called histone code, and nucleosome remodeling. In Guillardia theta (Cryptophyte), this protein is Histone H3.